We begin with the raw amino-acid sequence, 420 residues long: Serine hydroxymethyltransferase (420 aa).

(6S)-5,6,7,8-tetrahydrofolate-binding positions include Leu121 and 125–127 (GHL). Residue Lys230 is modified to N6-(pyridoxal phosphate)lysine.

The protein belongs to the SHMT family. Homodimer. It depends on pyridoxal 5'-phosphate as a cofactor.

The protein resides in the cytoplasm. The catalysed reaction is (6R)-5,10-methylene-5,6,7,8-tetrahydrofolate + glycine + H2O = (6S)-5,6,7,8-tetrahydrofolate + L-serine. It functions in the pathway one-carbon metabolism; tetrahydrofolate interconversion. The protein operates within amino-acid biosynthesis; glycine biosynthesis; glycine from L-serine: step 1/1. Its function is as follows. Catalyzes the reversible interconversion of serine and glycine with tetrahydrofolate (THF) serving as the one-carbon carrier. This reaction serves as the major source of one-carbon groups required for the biosynthesis of purines, thymidylate, methionine, and other important biomolecules. Also exhibits THF-independent aldolase activity toward beta-hydroxyamino acids, producing glycine and aldehydes, via a retro-aldol mechanism. The chain is Serine hydroxymethyltransferase from Streptomyces avermitilis (strain ATCC 31267 / DSM 46492 / JCM 5070 / NBRC 14893 / NCIMB 12804 / NRRL 8165 / MA-4680).